We begin with the raw amino-acid sequence, 196 residues long: Large ribosomal subunit protein bL25 (196 aa).

This sequence belongs to the bacterial ribosomal protein bL25 family. CTC subfamily. In terms of assembly, part of the 50S ribosomal subunit; part of the 5S rRNA/L5/L18/L25 subcomplex. Contacts the 5S rRNA. Binds to the 5S rRNA independently of L5 and L18.

In terms of biological role, this is one of the proteins that binds to the 5S RNA in the ribosome where it forms part of the central protuberance. The polypeptide is Large ribosomal subunit protein bL25 (Bacteroides fragilis (strain ATCC 25285 / DSM 2151 / CCUG 4856 / JCM 11019 / LMG 10263 / NCTC 9343 / Onslow / VPI 2553 / EN-2)).